Consider the following 129-residue polypeptide: MKKLGILNRDIARVLASLGHTDQIVIADCGLPIPSNVECIDLSIRLGVPNFVDVLTEVLADMEVELMMAATEVRTESPSIHQELENRQISIRYLPHDELKAETSKAKAIIRTGECAPYANVILRAGVIF.

His20 serves as the catalytic Proton donor. Substrate-binding positions include Asp28, His96, and 118-120; that span reads YAN.

The protein belongs to the RbsD / FucU family. RbsD subfamily. As to quaternary structure, homodecamer.

The protein localises to the cytoplasm. It carries out the reaction beta-D-ribopyranose = beta-D-ribofuranose. Its pathway is carbohydrate metabolism; D-ribose degradation; D-ribose 5-phosphate from beta-D-ribopyranose: step 1/2. In terms of biological role, catalyzes the interconversion of beta-pyran and beta-furan forms of D-ribose. This Shouchella clausii (strain KSM-K16) (Alkalihalobacillus clausii) protein is D-ribose pyranase.